Consider the following 258-residue polypeptide: MNKIKPKKRLGQHFLISKNVIEKIVDEINISKEDIIVEIGPGTGALTEEILLRNPKILYAIEIDTSVHPVLEEKFSIYSNFKLIKSDFFDVNLYELISDEEKIKLVGNLPYNVASLMIIDCAFKLDILEFCVFMIQKEVAEKLIAKPKTKDYTFLSVFIQTFFDIKYVMSVPARFFNPPPKVTSAVVKLTPKQNIAINNVKKYKNFISHLFQNRRKMIKSKIEEEMLNKAGISPNLRAEELSVEDFIRIFGVVENDDR.

S-adenosyl-L-methionine is bound by residues histidine 13, leucine 15, glycine 40, glutamate 62, aspartate 87, and asparagine 108.

Belongs to the class I-like SAM-binding methyltransferase superfamily. rRNA adenine N(6)-methyltransferase family. RsmA subfamily.

The protein localises to the cytoplasm. It catalyses the reaction adenosine(1518)/adenosine(1519) in 16S rRNA + 4 S-adenosyl-L-methionine = N(6)-dimethyladenosine(1518)/N(6)-dimethyladenosine(1519) in 16S rRNA + 4 S-adenosyl-L-homocysteine + 4 H(+). Specifically dimethylates two adjacent adenosines (A1518 and A1519) in the loop of a conserved hairpin near the 3'-end of 16S rRNA in the 30S particle. May play a critical role in biogenesis of 30S subunits. This is Ribosomal RNA small subunit methyltransferase A from Sulfurihydrogenibium sp. (strain YO3AOP1).